The primary structure comprises 323 residues: SURF1-like protein (323 aa).

Residues 57 to 71 (DAPKSRENREKDGGK) show a composition bias toward basic and acidic residues. The tract at residues 57-76 (DAPKSRENREKDGGKSKKSK) is disordered. A run of 2 helical transmembrane segments spans residues 81–101 (WSTGSVLMLTIPVFAFSLGIW) and 299–319 (HLNYLTTWFTLTLVTMLMWIH).

This sequence belongs to the SURF1 family.

It is found in the mitochondrion inner membrane. In terms of biological role, probably involved in the biogenesis of the COX complex. The polypeptide is SURF1-like protein (sft-1) (Caenorhabditis elegans).